Consider the following 424-residue polypeptide: Enolase (424 aa).

Q165 is a (2R)-2-phosphoglycerate binding site. E207 acts as the Proton donor in catalysis. Mg(2+) is bound by residues D244, E283, and D310. (2R)-2-phosphoglycerate contacts are provided by K335, R364, S365, and K386. Residue K335 is the Proton acceptor of the active site.

This sequence belongs to the enolase family. It depends on Mg(2+) as a cofactor.

It is found in the cytoplasm. The protein localises to the secreted. It localises to the cell surface. The catalysed reaction is (2R)-2-phosphoglycerate = phosphoenolpyruvate + H2O. It functions in the pathway carbohydrate degradation; glycolysis; pyruvate from D-glyceraldehyde 3-phosphate: step 4/5. Functionally, catalyzes the reversible conversion of 2-phosphoglycerate (2-PG) into phosphoenolpyruvate (PEP). It is essential for the degradation of carbohydrates via glycolysis. The protein is Enolase of Chlamydia muridarum (strain MoPn / Nigg).